A 1128-amino-acid polypeptide reads, in one-letter code: Glutamate receptor-interacting protein 1 (1128 aa).

The residue at position 43 (Ser43) is a Phosphoserine. PDZ domains lie at 53–136 (VVEL…EYEL), 150–238 (TVEV…EYDV), 252–336 (LVEV…LPHH), 472–561 (EVVL…EFDV), 573–658 (HVKL…RKDE), and 673–755 (TVEL…KKQT). Disordered stretches follow at residues 754 to 798 (QTDA…YPST) and 935 to 981 (MSLN…GRKS). Positions 944-974 (PRSQLGRQASFQERSSSRPHYSQTTRSNTLP) are enriched in polar residues. One can recognise a PDZ 7 domain in the interval 1004–1086 (KVTLYKDSDM…KLDLVISRNP (83 aa)). The segment covering 1093–1115 (IDQQSLPGDWSEQNSAFFQQPSH) has biased composition (polar residues). Positions 1093–1128 (IDQQSLPGDWSEQNSAFFQQPSHGGNLETREPTNTL) are disordered.

As to quaternary structure, interacts with EPHA7, EPHB2, KIF5A, KIF5B, KIF5C, GRIA2, GRIA3, GRIPAP1/GRASP1, PPFIA1, PPFIA4, FRAS1, PLCD4, PTPRF and liprins-alpha. Can form homomultimers or heteromultimers with GRIP2. Forms a ternary complex with GRIA2 and CSPG4. Interacts with ATAD1 in an ATP-dependent manner. ATAD1-catalyzed ATP hydrolysis disrupts binding to ATAD1 and to GRIA2 and leads to AMPAR complex disassembly. Interacts with EFNB1, EFNB3 and the C-terminal tail of PRLHR. Interacts with SLC30A9. Interacts with BUD23. Forms a complex with NSG1, GRIA2 and STX12; controls the intracellular fate of AMPAR and the endosomal sorting of the GRIA2 subunit toward recycling and membrane targeting. Interacts with NSG1.

Its subcellular location is the cytoplasmic vesicle. It is found in the perikaryon. The protein localises to the cell projection. The protein resides in the dendrite. It localises to the cytoplasm. Its subcellular location is the endomembrane system. It is found in the postsynaptic cell membrane. The protein localises to the postsynaptic density. The protein resides in the endoplasmic reticulum membrane. Functionally, may play a role as a localized scaffold for the assembly of a multiprotein signaling complex and as mediator of the trafficking of its binding partners at specific subcellular location in neurons. Through complex formation with NSG1, GRIA2 and STX12 controls the intracellular fate of AMPAR and the endosomal sorting of the GRIA2 subunit toward recycling and membrane targeting. This is Glutamate receptor-interacting protein 1 (GRIP1) from Homo sapiens (Human).